The chain runs to 153 residues: Aspartate carbamoyltransferase regulatory chain (153 aa).

Residues Cys-109, Cys-114, Cys-138, and Cys-141 each contribute to the Zn(2+) site.

This sequence belongs to the PyrI family. As to quaternary structure, contains catalytic and regulatory chains. The cofactor is Zn(2+).

Involved in allosteric regulation of aspartate carbamoyltransferase. This Edwardsiella ictaluri (strain 93-146) protein is Aspartate carbamoyltransferase regulatory chain.